The chain runs to 290 residues: ATP synthase gamma chain (290 aa).

Belongs to the ATPase gamma chain family. F-type ATPases have 2 components, CF(1) - the catalytic core - and CF(0) - the membrane proton channel. CF(1) has five subunits: alpha(3), beta(3), gamma(1), delta(1), epsilon(1). CF(0) has three main subunits: a, b and c.

The protein resides in the cell inner membrane. Functionally, produces ATP from ADP in the presence of a proton gradient across the membrane. The gamma chain is believed to be important in regulating ATPase activity and the flow of protons through the CF(0) complex. The sequence is that of ATP synthase gamma chain from Buchnera aphidicola subsp. Acyrthosiphon pisum (strain APS) (Acyrthosiphon pisum symbiotic bacterium).